A 342-amino-acid polypeptide reads, in one-letter code: Ketol-acid reductoisomerase (NADP(+)) (342 aa).

A KARI N-terminal Rossmann domain is found at 2-181 (VKVYYNGDIK…GGARAGVLET (180 aa)). NADP(+) is bound by residues 25 to 28 (YGSQ), R48, S52, and 82 to 85 (DEQQ). H107 is an active-site residue. G133 contacts NADP(+). One can recognise a KARI C-terminal knotted domain in the interval 182-327 (TFKEETETDL…RQLREMMPFV (146 aa)). Residues D190, E194, E226, and E230 each coordinate Mg(2+). S251 contributes to the substrate binding site.

This sequence belongs to the ketol-acid reductoisomerase family. It depends on Mg(2+) as a cofactor.

The enzyme catalyses (2R)-2,3-dihydroxy-3-methylbutanoate + NADP(+) = (2S)-2-acetolactate + NADPH + H(+). It catalyses the reaction (2R,3R)-2,3-dihydroxy-3-methylpentanoate + NADP(+) = (S)-2-ethyl-2-hydroxy-3-oxobutanoate + NADPH + H(+). Its pathway is amino-acid biosynthesis; L-isoleucine biosynthesis; L-isoleucine from 2-oxobutanoate: step 2/4. The protein operates within amino-acid biosynthesis; L-valine biosynthesis; L-valine from pyruvate: step 2/4. Its function is as follows. Involved in the biosynthesis of branched-chain amino acids (BCAA). Catalyzes an alkyl-migration followed by a ketol-acid reduction of (S)-2-acetolactate (S2AL) to yield (R)-2,3-dihydroxy-isovalerate. In the isomerase reaction, S2AL is rearranged via a Mg-dependent methyl migration to produce 3-hydroxy-3-methyl-2-ketobutyrate (HMKB). In the reductase reaction, this 2-ketoacid undergoes a metal-dependent reduction by NADPH to yield (R)-2,3-dihydroxy-isovalerate. The protein is Ketol-acid reductoisomerase (NADP(+)) of Bacillus velezensis (strain DSM 23117 / BGSC 10A6 / LMG 26770 / FZB42) (Bacillus amyloliquefaciens subsp. plantarum).